We begin with the raw amino-acid sequence, 244 residues long: Protein HRI1 (244 aa).

A Phosphoserine modification is found at Ser-143.

This sequence belongs to the HRI1 family. In terms of assembly, interacts with HRR25. May interact with SEC72.

The protein resides in the cytoplasm. Its subcellular location is the nucleus. Unknown. Non essential. The sequence is that of Protein HRI1 (HRI1) from Saccharomyces cerevisiae (strain ATCC 204508 / S288c) (Baker's yeast).